The sequence spans 401 residues: Phosphoglycerate kinase, cytosolic (401 aa).

(2R)-3-phosphoglycerate-binding residues include Ala-24, Asp-25, Asn-27, Arg-41, Ser-63, His-64, Gly-66, Arg-67, Arg-122, His-154, and Arg-155. Residue Gly-200 coordinates ADP. Gly-200 is a binding site for CDP. Positions 202 and 206 each coordinate AMP. Lys-206 lines the ATP pocket. Residue Gly-224 participates in ADP binding. Residue Gly-224 coordinates CDP. The AMP site is built by Gly-225 and Gly-297. ATP is bound by residues Gly-225 and Gly-297. Residues Gly-322 and Phe-327 each contribute to the CDP site. Residue Phe-327 coordinates ADP. Position 328 (Glu-328) interacts with AMP. 3 residues coordinate ATP: Glu-328, Asp-359, and Ser-360. Asp-359 serves as a coordination point for Mg(2+).

The protein belongs to the phosphoglycerate kinase family. In terms of assembly, monomer. It depends on Mg(2+) as a cofactor.

Its subcellular location is the cytoplasm. The enzyme catalyses (2R)-3-phosphoglycerate + ATP = (2R)-3-phospho-glyceroyl phosphate + ADP. Its pathway is carbohydrate degradation; glycolysis; pyruvate from D-glyceraldehyde 3-phosphate: step 2/5. The chain is Phosphoglycerate kinase, cytosolic from Triticum aestivum (Wheat).